A 461-amino-acid chain; its full sequence is Argininosuccinate lyase (461 aa).

The protein belongs to the lyase 1 family. Argininosuccinate lyase subfamily.

The protein resides in the cytoplasm. The enzyme catalyses 2-(N(omega)-L-arginino)succinate = fumarate + L-arginine. It functions in the pathway amino-acid biosynthesis; L-arginine biosynthesis; L-arginine from L-ornithine and carbamoyl phosphate: step 3/3. This is Argininosuccinate lyase from Streptococcus thermophilus (strain CNRZ 1066).